Reading from the N-terminus, the 39-residue chain is MVEALLSGIVLGLVPVTILGLFVTAYLQYRRGDRVTSSF.

Residues 5–25 (LLSGIVLGLVPVTILGLFVTA) traverse the membrane as a helical segment.

The protein belongs to the PetG family. In terms of assembly, the 4 large subunits of the cytochrome b6-f complex are cytochrome b6, subunit IV (17 kDa polypeptide, PetD), cytochrome f and the Rieske protein, while the 4 small subunits are PetG, PetL, PetM and PetN. The complex functions as a dimer.

Its subcellular location is the plastid. It is found in the chloroplast thylakoid membrane. Component of the cytochrome b6-f complex, which mediates electron transfer between photosystem II (PSII) and photosystem I (PSI), cyclic electron flow around PSI, and state transitions. PetG is required for either the stability or assembly of the cytochrome b6-f complex. In Pleurastrum terricola (Filamentous green alga), this protein is Cytochrome b6-f complex subunit 5.